We begin with the raw amino-acid sequence, 142 residues long: Large ribosomal subunit protein uL13 (142 aa).

This sequence belongs to the universal ribosomal protein uL13 family. Part of the 50S ribosomal subunit.

In terms of biological role, this protein is one of the early assembly proteins of the 50S ribosomal subunit, although it is not seen to bind rRNA by itself. It is important during the early stages of 50S assembly. The sequence is that of Large ribosomal subunit protein uL13 from Shewanella oneidensis (strain ATCC 700550 / JCM 31522 / CIP 106686 / LMG 19005 / NCIMB 14063 / MR-1).